A 692-amino-acid polypeptide reads, in one-letter code: Centrosomal protein of 83 kDa (692 aa).

Coiled-coil stretches lie at residues 32–625 (RCEH…SLIL) and 656–689 (HLQE…ELGS). The residue at position 689 (Ser689) is a Phosphoserine.

It belongs to the CEP83 family. In terms of assembly, interacts with CEP164 and IFT20.

It is found in the cytoplasm. Its subcellular location is the cytoskeleton. The protein resides in the microtubule organizing center. The protein localises to the centrosome. It localises to the centriole. Its function is as follows. Component of the distal appendage region of the centriole involved in the initiation of primary cilium assembly. May collaborate with IFT20 in the trafficking of ciliary membrane proteins from the Golgi complex to the cilium during the initiation of primary cilium assembly. The protein is Centrosomal protein of 83 kDa (Cep83) of Mus musculus (Mouse).